Here is a 199-residue protein sequence, read N- to C-terminus: Charged multivesicular body protein 1b (199 aa).

Residues 26–48 are a coiled coil; sequence DKEEKAEKAKIKKAIQKGNMEVA. The segment at 132-156 is interaction with IST1; it reads MEDTMSSTTTLTTPQGQVDMLLQEM. The tract at residues 167–199 is disordered; sequence ELPQGQTGSVGTSVASAEQDELSQRLARLRDQV. Polar residues predominate over residues 170-182; it reads QGQTGSVGTSVAS. Positions 174–199 are interaction with SPAST; sequence GSVGTSVASAEQDELSQRLARLRDQV. Positions 178-199 form a coiled coil; it reads TSVASAEQDELSQRLARLRDQV. Positions 180 to 196 are interaction with VPS4A, MITD1 and STAMBP; that stretch reads VASAEQDELSQRLARLR. The interval 180–199 is interaction with VTA1; sequence VASAEQDELSQRLARLRDQV. Residues 183–199 form an interaction with VPS4B region; that stretch reads AEQDELSQRLARLRDQV. The short motif at 186 to 196 is the MIT-interacting motif element; that stretch reads DELSQRLARLR.

The protein belongs to the SNF7 family. As to quaternary structure, probable peripherally associated component of the endosomal sorting required for transport complex III (ESCRT-III). ESCRT-III components are thought to multimerize to form a flat lattice on the perimeter membrane of the endosome. Several assembly forms of ESCRT-III may exist that interact and act sequentially. Interacts with CHMP1A. Interacts with VTA1; the interaction probably involves the open conformation of CHMP1B. Interacts with CHMP2A. Interacts with VPS4A; the interaction is direct. Interacts with VPS4B; the interaction is direct. Interacts with SPAST (via MIT domain); the interaction is direct. Interacts with IST1. Interacts with MITD1. Interacts with STAMBP.

It is found in the cytoplasm. The protein resides in the cytosol. The protein localises to the endosome. It localises to the late endosome membrane. Probable peripherally associated component of the endosomal sorting required for transport complex III (ESCRT-III) which is involved in multivesicular bodies (MVBs) formation and sorting of endosomal cargo proteins into MVBs. MVBs contain intraluminal vesicles (ILVs) that are generated by invagination and scission from the limiting membrane of the endosome and mostly are delivered to lysosomes enabling degradation of membrane proteins, such as stimulated growth factor receptors, lysosomal enzymes and lipids. The MVB pathway appears to require the sequential function of ESCRT-O, -I,-II and -III complexes. ESCRT-III proteins mostly dissociate from the invaginating membrane before the ILV is released. The ESCRT machinery also functions in topologically equivalent membrane fission events, such as the terminal stages of cytokinesis and the budding of enveloped viruses (lentiviruses). ESCRT-III proteins are believed to mediate the necessary vesicle extrusion and/or membrane fission activities, possibly in conjunction with the AAA ATPase VPS4. Involved in cytokinesis. Involved in recruiting VPS4A and/or VPS4B and SPAST to the midbody of dividing cells. In Bos taurus (Bovine), this protein is Charged multivesicular body protein 1b (CHMP1B).